The chain runs to 153 residues: Alpha-amylase inhibitor 0.28 (153 aa).

The first 30 residues, 1–30, serve as a signal peptide directing secretion; that stretch reads MWMKTVFWGLLVFMLVATTMAVEYGARSHN. Cystine bridges form between Cys37–Cys84, Cys51–Cys72, Cys59–Cys112, Cys73–Cys128, and Cys86–Cys143.

Belongs to the protease inhibitor I6 (cereal trypsin/alpha-amylase inhibitor) family. As to quaternary structure, monomer. Post-translationally, the disulfide bonds are essential for the inhibitor activity. Endosperm.

The protein localises to the secreted. In terms of biological role, alpha-amylase inhibitor. The chain is Alpha-amylase inhibitor 0.28 (IMA1) from Triticum aestivum (Wheat).